The following is a 666-amino-acid chain: Collagen alpha-1(XXV) chain (666 aa).

The disordered stretch occupies residues 1–24 (MLVKKLAGKGGGRESGSEDPRPLG). At 1-33 (MLVKKLAGKGGGRESGSEDPRPLGQRCAGTMPS) the chain is on the cytoplasmic side. The segment covering 11 to 21 (GGRESGSEDPR) has biased composition (basic and acidic residues). The helical; Signal-anchor for type II membrane protein transmembrane segment at 34 to 54 (CTALATLLSVVAVAFCFYLGV) threads the bilayer. Residues 55–666 (KTNDLQARIA…GLPMPGCWQK (612 aa)) are Extracellular-facing. Residues 116–168 (LECNCPAGPPGKRGKRGRRGESGPPGQPGPQGPPGPKGDKGEQGDQGPRMVFP) form a disordered region. The Collagen-like 1 domain maps to 121-164 (PAGPPGKRGKRGRRGESGPPGQPGPQGPPGPKGDKGEQGDQGPR). Over residues 140–151 (PGQPGPQGPPGP) the composition is skewed to pro residues. The interaction with amyloid-beta peptide stretch occupies residues 181 to 188 (LIKRRLIK). Disordered stretches follow at residues 189–428 (GDQG…ATEI) and 445–666 (LTVT…CWQK). 7 consecutive Collagen-like domains span residues 192 to 247 (GQAG…QKGS), 249 to 308 (GAPG…PGSS), 311 to 370 (GIKG…AGPP), 373 to 425 (GERG…DPGA), 455 to 514 (GPQG…KGEK), 529 to 588 (GPPG…KGAM), and 589 to 648 (GEPG…DGLD). Residues 196-208 (PPGPPGPPGPRGP) are compositionally biased toward pro residues. Residues 230–245 (PGEQGLMGPLGPPGQK) are compositionally biased toward low complexity. Residues 280 to 290 (EPGKEGEKGDA) are compositionally biased toward basic and acidic residues. Over residues 336-358 (LPGIKGEPGFIGPQGEPGLPGLP) the composition is skewed to low complexity. 2 stretches are compositionally biased toward basic and acidic residues: residues 361 to 377 (KGDRGEAGPPGRGERGD) and 398 to 407 (SKGDRGDKGD). The segment covering 457–466 (QGLQGPKGEQ) has biased composition (low complexity). Residues 494–503 (GEKGGLGLPG) show a composition bias toward gly residues. A compositionally biased stretch (pro residues) spans 528–543 (IGPPGPPGPHGPPGPM). Positions 615 to 638 (RGEKGDLGEKGEKGFRGVKGEKGE) are enriched in basic and acidic residues.

As to quaternary structure, forms homodimers and homotrimers. Binds to the fibrillized forms of amyloid-beta protein 40 (beta-APP40) and amyloid-betad protein 42 (beta-APP42). Found associated with beta-APP42 more frequently than with beta-APP40. Undergoes proteolytic cleavage by furin protease to yield the soluble collagen-like Alzheimer amyloid plaque component. In terms of processing, glycosylated. Post-translationally, hydroxylated on proline and lysine residues. In terms of tissue distribution, expressed predominantly in neurons with low levels also detected in heart, testis and eye.

The protein localises to the membrane. Inhibits fibrillization of amyloid-beta peptide during the elongation phase. Has also been shown to assemble amyloid fibrils into protease-resistant aggregates. Binds heparin. This chain is Collagen alpha-1(XXV) chain, found in Mus musculus (Mouse).